Consider the following 425-residue polypeptide: Imidazolonepropionase (425 aa).

Fe(3+) contacts are provided by His-82 and His-84. The Zn(2+) site is built by His-82 and His-84. The 4-imidazolone-5-propanoate site is built by Arg-91, Tyr-154, and His-187. Tyr-154 provides a ligand contact to N-formimidoyl-L-glutamate. His-253 is a binding site for Fe(3+). A Zn(2+)-binding site is contributed by His-253. Glu-256 serves as a coordination point for 4-imidazolone-5-propanoate. A Fe(3+)-binding site is contributed by Asp-328. Residue Asp-328 coordinates Zn(2+). Residues Asn-330 and Gly-332 each contribute to the N-formimidoyl-L-glutamate site. Ser-333 is a 4-imidazolone-5-propanoate binding site.

This sequence belongs to the metallo-dependent hydrolases superfamily. HutI family. Zn(2+) is required as a cofactor. Requires Fe(3+) as cofactor.

It localises to the cytoplasm. The catalysed reaction is 4-imidazolone-5-propanoate + H2O = N-formimidoyl-L-glutamate. Its pathway is amino-acid degradation; L-histidine degradation into L-glutamate; N-formimidoyl-L-glutamate from L-histidine: step 3/3. Functionally, catalyzes the hydrolytic cleavage of the carbon-nitrogen bond in imidazolone-5-propanoate to yield N-formimidoyl-L-glutamate. It is the third step in the universal histidine degradation pathway. The chain is Imidazolonepropionase from Symbiobacterium thermophilum (strain DSM 24528 / JCM 14929 / IAM 14863 / T).